Consider the following 154-residue polypeptide: MQAVGATLTAVGAIGAGLLVTAPAAGAATAGATASYNGVCGSGYKVVNSMPIGSTGTVYLTYNSATGKNCTVTIRNTTGTPTYMVAYVRNIESGADQYDEGDYRSYAGPVYVSARGACVEWGGVIGNLQAWNYGSNCGALAAKAPQKDWFAGQR.

The first 33 residues, 1–33 (MQAVGATLTAVGAIGAGLLVTAPAAGAATAGAT), serve as a signal peptide directing secretion.

The protein localises to the spore wall. The chain is Spore-associated protein A from Streptomyces coelicolor (strain ATCC BAA-471 / A3(2) / M145).